The primary structure comprises 24 residues: Small ribosomal subunit protein uS19 (24 aa).

Residues 1 to 24 (KLGEFSPTRTYRGHNKKDKKMQKK) form a disordered region. Residues 11-24 (YRGHNKKDKKMQKK) are compositionally biased toward basic residues.

The protein belongs to the universal ribosomal protein uS19 family.

In terms of biological role, protein S19 forms a complex with S13 that binds strongly to the 16S ribosomal RNA. This Phytoplasma sp. (strain STRAWB2) protein is Small ribosomal subunit protein uS19.